A 425-amino-acid polypeptide reads, in one-letter code: Cyclin-K (425 aa).

The interval 262–425 is disordered; that stretch reads GKQPIPQQPP…RRYLDDDRNL (164 aa). Residues 366–377 are compositionally biased toward low complexity; that stretch reads AEPAAASELDPA. Positions 379–399 are enriched in pro residues; it reads GPAPPLPHGAPPPLPHRPPPT.

It belongs to the cyclin family.

Its subcellular location is the nucleus. Regulatory subunit of cyclin-dependent kinases that mediates activation of target kinases. Plays a role in transcriptional regulation via its role in regulating the phosphorylation of the C-terminal domain (CTD) of the large subunit of RNA polymerase II (POLR2A). The polypeptide is Cyclin-K (ccnk) (Danio rerio (Zebrafish)).